The following is a 531-amino-acid chain: Outer dynein arm-docking complex subunit 4 (531 aa).

TPR repeat units lie at residues 15-48 (FSTYMAEGEQLYHKAEYKKASDSFTAALQLQPEE), 50-82 (NCLVARSKCFLKLGEPECALKDAEASLQIENDF), and 83-116 (FKGLYQKAEALYAMGDFEFALVHYHRGYKLRPEF). Positions 161-185 (KQKAQVKVQKKDSKQQKKVDPERSQ) are disordered. Positions 169–185 (QKKDSKQQKKVDPERSQ) are enriched in basic and acidic residues. TPR repeat units follow at residues 275–307 (VKSLEEIDQLLSSGKAEESYKKAQLVLKKVERW), 320–353 (GSLHSCIGNAQMDMGQIEAALQSHKKDLAIAEKY), 360–393 (SRALDNIGRVYARIGKFNEAIKVWEEKIPLANSS), 397–430 (TWLYHEIGRCYLELEQTAEAKEYGEKSQQEADAA), and 437–470 (LNACVLLAQAEVKLKHYQSAISSFENALERARLL). A disordered region spans residues 487–531 (KQGMEEQQESEQNNDENDNLRADGNTARDEEEEDVHVQRTEEDEG). The segment covering 492-503 (EQQESEQNNDEN) has biased composition (acidic residues). Positions 521–531 (VHVQRTEEDEG) are enriched in basic and acidic residues.

In terms of assembly, component of the outer dynein arm-docking complex. In the mucociliary epithelium, specifically expressed in ciliated cells.

It localises to the cytoplasm. The protein resides in the cytoskeleton. The protein localises to the cilium axoneme. In terms of biological role, component of the outer dynein arm-docking complex (ODA-DC) that mediates outer dynein arms (ODA) binding onto the doublet microtubule. Plays an essential role for the assembly of ODA-DC and in the docking of ODA in ciliary axoneme. Required for the docking of the outer dynein arm to cilia, hence plays an essential role in cilia motility. In Xenopus laevis (African clawed frog), this protein is Outer dynein arm-docking complex subunit 4 (odad4).